The sequence spans 338 residues: Phenylalanine--tRNA ligase alpha subunit (338 aa).

Residue glutamate 253 participates in Mg(2+) binding.

Belongs to the class-II aminoacyl-tRNA synthetase family. Phe-tRNA synthetase alpha subunit type 1 subfamily. In terms of assembly, tetramer of two alpha and two beta subunits. The cofactor is Mg(2+).

It is found in the cytoplasm. The catalysed reaction is tRNA(Phe) + L-phenylalanine + ATP = L-phenylalanyl-tRNA(Phe) + AMP + diphosphate + H(+). This chain is Phenylalanine--tRNA ligase alpha subunit, found in Gloeobacter violaceus (strain ATCC 29082 / PCC 7421).